A 98-amino-acid chain; its full sequence is Acylphosphatase (98 aa).

The Acylphosphatase-like domain maps to 12–98 (TYYVRVRGVV…DKRFERFQQH (87 aa)). Residues Arg-27 and Asn-45 contribute to the active site.

It belongs to the acylphosphatase family.

It carries out the reaction an acyl phosphate + H2O = a carboxylate + phosphate + H(+). The polypeptide is Acylphosphatase (acyP) (Burkholderia mallei (strain NCTC 10247)).